A 90-amino-acid chain; its full sequence is Cell division protein CrgA (90 aa).

The tract at residues 1–26 is disordered; the sequence is MPKAKVTKNSIAPVSSNPSANRTPVK. Polar residues predominate over residues 7-26; that stretch reads TKNSIAPVSSNPSANRTPVK. Transmembrane regions (helical) follow at residues 38-58 and 69-89; these read VIMF…YLVG and AWNY…TMGW.

This sequence belongs to the CrgA family.

Its subcellular location is the cell membrane. Involved in cell division. In Corynebacterium efficiens (strain DSM 44549 / YS-314 / AJ 12310 / JCM 11189 / NBRC 100395), this protein is Cell division protein CrgA.